A 635-amino-acid chain; its full sequence is Putative adagio-like protein 2 (635 aa).

Acidic residues predominate over residues 1–25 (MEWDSDSEGSGDEEEEEEEEEEEGV). A disordered region spans residues 1–32 (MEWDSDSEGSGDEEEEEEEEEEEGVEVGGGGD). A PAS domain is found at 44-123 (ALAIEGVLGA…TDIRRCLEEG (80 aa)). Cys91 bears the S-4a-FMN cysteine mark. The F-box domain maps to 209 to 255 (SDLFLLSDEVLCQKILSRLSPRDIASVNSVCKRLYHLTRNDDLWRMV). 4 Kelch repeats span residues 371 to 421 (RLVL…TLDG), 423 to 474 (KLVV…VYDG), 476 to 530 (KILM…PPPR), and 542 to 594 (RILI…VVGG).

This sequence belongs to the ADAGIO family. Post-translationally, FMN binds covalently to cysteine after exposure to blue light and is reversed in the dark.

The protein localises to the nucleus. It functions in the pathway protein modification; protein ubiquitination. In terms of biological role, component of an E3 ubiquitin ligase complex that plays a central role in blue light-dependent circadian cycles. Acts as a blue light photoreceptor, due to the presence of FMN, that mediates light-regulated protein degradation of critical clock components by targeting them to the proteasome complex. The protein is Putative adagio-like protein 2 of Oryza sativa subsp. japonica (Rice).